The chain runs to 66 residues: Large ribosomal subunit protein uL29 (66 aa).

Belongs to the universal ribosomal protein uL29 family.

The chain is Large ribosomal subunit protein uL29 from Caldanaerobacter subterraneus subsp. tengcongensis (strain DSM 15242 / JCM 11007 / NBRC 100824 / MB4) (Thermoanaerobacter tengcongensis).